Consider the following 288-residue polypeptide: Elongation factor Ts (288 aa).

Residues 80 to 83 (TDFV) form an involved in Mg(2+) ion dislocation from EF-Tu region.

The protein belongs to the EF-Ts family.

It localises to the cytoplasm. Functionally, associates with the EF-Tu.GDP complex and induces the exchange of GDP to GTP. It remains bound to the aminoacyl-tRNA.EF-Tu.GTP complex up to the GTP hydrolysis stage on the ribosome. This Chromobacterium violaceum (strain ATCC 12472 / DSM 30191 / JCM 1249 / CCUG 213 / NBRC 12614 / NCIMB 9131 / NCTC 9757 / MK) protein is Elongation factor Ts.